We begin with the raw amino-acid sequence, 556 residues long: Formate--tetrahydrofolate ligase (556 aa).

ATP is bound at residue 65–72 (TPAGEGKS).

It belongs to the formate--tetrahydrofolate ligase family.

The enzyme catalyses (6S)-5,6,7,8-tetrahydrofolate + formate + ATP = (6R)-10-formyltetrahydrofolate + ADP + phosphate. It functions in the pathway one-carbon metabolism; tetrahydrofolate interconversion. This is Formate--tetrahydrofolate ligase from Natranaerobius thermophilus (strain ATCC BAA-1301 / DSM 18059 / JW/NM-WN-LF).